A 205-amino-acid polypeptide reads, in one-letter code: Methylamine utilization protein MauD (205 aa).

The chain crosses the membrane as a helical span at residues Phe5–Leu25. Residues Pro50–Ser184 enclose the Thioredoxin domain.

The protein resides in the membrane. It functions in the pathway one-carbon metabolism; methylamine degradation. In terms of biological role, may be specifically involved in the processing, transport, and/or maturation of the MADH beta-subunit. This Methylorubrum extorquens (strain ATCC 14718 / DSM 1338 / JCM 2805 / NCIMB 9133 / AM1) (Methylobacterium extorquens) protein is Methylamine utilization protein MauD (mauD).